Reading from the N-terminus, the 305-residue chain is Sulfate adenylyltransferase subunit 2 (305 aa).

Belongs to the PAPS reductase family. CysD subfamily. In terms of assembly, heterodimer composed of CysD, the smaller subunit, and CysN.

It carries out the reaction sulfate + ATP + H(+) = adenosine 5'-phosphosulfate + diphosphate. Its pathway is sulfur metabolism; hydrogen sulfide biosynthesis; sulfite from sulfate: step 1/3. With CysN forms the ATP sulfurylase (ATPS) that catalyzes the adenylation of sulfate producing adenosine 5'-phosphosulfate (APS) and diphosphate, the first enzymatic step in sulfur assimilation pathway. APS synthesis involves the formation of a high-energy phosphoric-sulfuric acid anhydride bond driven by GTP hydrolysis by CysN coupled to ATP hydrolysis by CysD. The polypeptide is Sulfate adenylyltransferase subunit 2 (Pseudomonas fluorescens (strain SBW25)).